The primary structure comprises 425 residues: Histidine--tRNA ligase (425 aa).

The protein belongs to the class-II aminoacyl-tRNA synthetase family. In terms of assembly, homodimer.

The protein localises to the cytoplasm. The enzyme catalyses tRNA(His) + L-histidine + ATP = L-histidyl-tRNA(His) + AMP + diphosphate + H(+). The sequence is that of Histidine--tRNA ligase from Buchnera aphidicola subsp. Baizongia pistaciae (strain Bp).